We begin with the raw amino-acid sequence, 490 residues long: Monocarboxylate transporter 3 (490 aa).

Over 1 to 14 the chain is Cytoplasmic; that stretch reads MGAGGPRRGAGPPD. Residues 15 to 35 traverse the membrane as a helical segment; the sequence is GGWGWVVLGACFVITGFAYGF. Residues 36–58 are Extracellular-facing; the sequence is PKAVSVFFRELKRDFGAGYSDTA. Residues 59-79 form a helical membrane-spanning segment; the sequence is WVSSIMLAMLYGTGPLSSILV. Over 80–85 the chain is Cytoplasmic; that stretch reads TRFGCR. Residues 86 to 106 traverse the membrane as a helical segment; that stretch reads PVMLAGGLLASAGMILASFAS. The Extracellular portion of the chain corresponds to 107–115; the sequence is RLLELYLTA. Residues 116-136 form a helical membrane-spanning segment; it reads GVLTGLGLALNFQPSLIMLGL. Over 137-147 the chain is Cytoplasmic; sequence YFERRRPLANG. A helical transmembrane segment spans residues 148-168; it reads LAAAGSPVFLSTLSPLGQLLG. Residues 169–172 are Extracellular-facing; it reads ERFG. A helical membrane pass occupies residues 173–193; the sequence is WRGGFLLFGGLLLHCCACGAV. The Cytoplasmic portion of the chain corresponds to 194–230; the sequence is MRPPPGPQPRPDPAPPGGRARHRQLLDLAVCTDRTFM. A helical transmembrane segment spans residues 231–251; sequence VYMVTKFLMALGLFVPAILLV. Residues 252-257 are Extracellular-facing; sequence NYAKDA. A helical transmembrane segment spans residues 258–278; sequence GVPDAEAAFLLSIVGFVDIVA. Residues 279 to 293 lie on the Cytoplasmic side of the membrane; sequence RPACGALAGLGRLRP. Residues 294 to 314 form a helical membrane-spanning segment; it reads HVPYLFSLALLANGLTDLISA. Topologically, residues 315–318 are extracellular; the sequence is RARS. Residues 319–339 form a helical membrane-spanning segment; it reads YGTLVAFCIAFGLSYGMVGAL. The Cytoplasmic portion of the chain corresponds to 340–352; that stretch reads QFEVLMATVGAPR. A helical transmembrane segment spans residues 353–373; the sequence is FPSALGLVLLVEAVAVLIGPP. The Extracellular segment spans residues 374–386; that stretch reads SAGRLVDALKNYE. The chain crosses the membrane as a helical span at residues 387–407; the sequence is IIFYLAGSEVVLAGVFMAVTT. At 408-490 the chain is on the cytoplasmic side; that stretch reads YCCQRCSKDI…GGHEAHGQNA (83 aa). A disordered region spans residues 419–490; that stretch reads PGPSAEGGTS…GGHEAHGQNA (72 aa). Basolateral sorting signal regions lie at residues 426–460 and 461–480; these read GTSDTEDVEAERDSEPMPASTEEPGSLEALEVLSP and RAGSPEPEEEAVPDLSHESV. Over residues 475–490 the composition is skewed to basic and acidic residues; that stretch reads LSHESVGGHEAHGQNA.

This sequence belongs to the major facilitator superfamily. Monocarboxylate porter (TC 2.A.1.13) family. Retinal pigment epithelium.

Its subcellular location is the basolateral cell membrane. It catalyses the reaction (S)-lactate(in) + H(+)(in) = (S)-lactate(out) + H(+)(out). Its function is as follows. Probable retinal pigment epithelium (RPE)-specific proton-coupled L-lactate transporter. May facilitate transport of lactate and H(+) out of the retina and could therefore play a role in pH and ion homeostasis of the outer retina. The polypeptide is Monocarboxylate transporter 3 (Slc16a8) (Rattus norvegicus (Rat)).